A 244-amino-acid polypeptide reads, in one-letter code: Chalcone--flavanone isomerase (244 aa).

Thr45, Asn110, and Ser187 together coordinate substrate.

Belongs to the chalcone isomerase family.

It carries out the reaction a chalcone = a flavanone.. It participates in secondary metabolite biosynthesis; flavonoid biosynthesis. In terms of biological role, catalyzes the intramolecular cyclization of bicyclic chalcones into tricyclic (S)-flavanones. Responsible for the isomerization of 4,2',4',6'-tetrahydroxychalcone (also termed chalcone) into naringenin. This is Chalcone--flavanone isomerase (CHI) from Nicotiana tabacum (Common tobacco).